The chain runs to 72 residues: Small ribosomal subunit protein bS18 (72 aa).

This sequence belongs to the bacterial ribosomal protein bS18 family. As to quaternary structure, part of the 30S ribosomal subunit. Forms a tight heterodimer with protein bS6.

Functionally, binds as a heterodimer with protein bS6 to the central domain of the 16S rRNA, where it helps stabilize the platform of the 30S subunit. The protein is Small ribosomal subunit protein bS18 of Francisella tularensis subsp. holarctica (strain FTNF002-00 / FTA).